The chain runs to 172 residues: Signal peptidase complex catalytic subunit SEC11 (172 aa).

The Cytoplasmic portion of the chain corresponds to 1 to 14 (MLSSLQNPRQAAAQ). The chain crosses the membrane as a helical; Signal-anchor for type II membrane protein span at residues 15–35 (LMNFAMILSTAFMMWKGLSVA). The Lumenal segment spans residues 36-172 (TDSPSPIVVV…MGLLVVIQRE (137 aa)). Residues Ser49, His90, and Asp115 each act as charge relay system in the active site. The tract at residues 158 to 169 (VMLGIMGLLVVI) is C-terminal short (CTS) helix.

It belongs to the peptidase S26B family. As to quaternary structure, component of the signal peptidase complex (SPC) composed of a catalytic subunit SEC11 and three accessory subunits SPC1, SPC2 and SPC3. The complex induces a local thinning of the ER membrane which is used to measure the length of the signal peptide (SP) h-region of protein substrates. This ensures the selectivity of the complex towards h-regions shorter than 18-20 amino acids. SPC associates with the translocon complex.

Its subcellular location is the endoplasmic reticulum membrane. It carries out the reaction Cleavage of hydrophobic, N-terminal signal or leader sequences from secreted and periplasmic proteins.. Functionally, catalytic component of the signal peptidase complex (SPC) which catalyzes the cleavage of N-terminal signal sequences from nascent proteins as they are translocated into the lumen of the endoplasmic reticulum. Specifically cleaves N-terminal signal peptides that contain a hydrophobic alpha-helix (h-region) shorter than 18-20 amino acids. The protein is Signal peptidase complex catalytic subunit SEC11 (SEC11) of Metarhizium robertsii (strain ARSEF 23 / ATCC MYA-3075) (Metarhizium anisopliae (strain ARSEF 23)).